A 20-amino-acid polypeptide reads, in one-letter code: Cytochrome P450-RR1 (20 aa).

It belongs to the cytochrome P450 family. Requires heme as cofactor.

In terms of biological role, P450-RRI catalyzes the O-dealkylation of 2-ethoxyphenol and 2-methoxyphenol to produce catechol. The cytochrome binds other ortho-substituted phenols, including 2-ethoxyphenol, 2-methylphenol and 2-chlorophenol. The chain is Cytochrome P450-RR1 from Rhodococcus rhodochrous.